The primary structure comprises 140 residues: Cytochrome b (140 aa).

A helical transmembrane segment spans residues 38 to 58; that stretch reads FFALHFLLPFVLAALVIMHLI. Residues H42 and H56 each coordinate heme b. Position 61 (H61) interacts with a ubiquinone. A helical membrane pass occupies residues 85–105; it reads FVFKDLVTIFIFFIVLSIFVF.

Belongs to the cytochrome b family. As to quaternary structure, fungal cytochrome b-c1 complex contains 10 subunits; 3 respiratory subunits, 2 core proteins and 5 low-molecular weight proteins. Cytochrome b-c1 complex is a homodimer. Heme b is required as a cofactor.

It is found in the mitochondrion inner membrane. Functionally, component of the ubiquinol-cytochrome c reductase complex (complex III or cytochrome b-c1 complex) that is part of the mitochondrial respiratory chain. The b-c1 complex mediates electron transfer from ubiquinol to cytochrome c. Contributes to the generation of a proton gradient across the mitochondrial membrane that is then used for ATP synthesis. In Aspergillus terreus, this protein is Cytochrome b (cob).